Here is a 209-residue protein sequence, read N- to C-terminus: rRNA N(6)-adenosine-methyltransferase METTL5 (209 aa).

Residues Gln-28, Thr-31, Gly-59, Cys-62, Val-64, Asp-81, and 108 to 109 (DV) contribute to the S-adenosyl-L-methionine site.

Belongs to the methyltransferase superfamily. PrmA family. As to quaternary structure, heterodimer; heterodimerizes with TRMT112. In terms of tissue distribution, ubiquitously expressed in brain.

It localises to the nucleus. The protein localises to the presynapse. It is found in the postsynapse. The enzyme catalyses adenosine(1832) in 18S rRNA + S-adenosyl-L-methionine = N(6)-methyladenosine(1832) in 18S rRNA + S-adenosyl-L-homocysteine + H(+). RRNA N6-adenosine-methyltransferase activity is inhibited by zinc. In terms of biological role, catalytic subunit of a heterodimer with TRMT112, which specifically methylates the 6th position of adenine in position 1832 of 18S rRNA. N6-methylation of adenine(1832) in 18S rRNA resides in the decoding center of 18S rRNA and is required for translation and embryonic stem cells (ESCs) pluripotency and differentiation. The chain is rRNA N(6)-adenosine-methyltransferase METTL5 from Mus musculus (Mouse).